The following is a 184-amino-acid chain: Ribosome maturation factor RimM (184 aa).

The region spanning 101–180 is the PRC barrel domain; the sequence is DGEFFYCDLV…KITTNNAKTL (80 aa).

The protein belongs to the RimM family. As to quaternary structure, binds ribosomal protein uS19.

It is found in the cytoplasm. Its function is as follows. An accessory protein needed during the final step in the assembly of 30S ribosomal subunit, possibly for assembly of the head region. Essential for efficient processing of 16S rRNA. May be needed both before and after RbfA during the maturation of 16S rRNA. It has affinity for free ribosomal 30S subunits but not for 70S ribosomes. The polypeptide is Ribosome maturation factor RimM (Helicobacter pylori (strain Shi470)).